The chain runs to 212 residues: Orotate phosphoribosyltransferase (212 aa).

Residues Arg-97, Lys-101, His-103, and 123-131 (EDLISTGGS) contribute to the 5-phospho-alpha-D-ribose 1-diphosphate site. Ser-127 is an orotate binding site.

Belongs to the purine/pyrimidine phosphoribosyltransferase family. PyrE subfamily. In terms of assembly, homodimer. Requires Mg(2+) as cofactor.

The enzyme catalyses orotidine 5'-phosphate + diphosphate = orotate + 5-phospho-alpha-D-ribose 1-diphosphate. The protein operates within pyrimidine metabolism; UMP biosynthesis via de novo pathway; UMP from orotate: step 1/2. In terms of biological role, catalyzes the transfer of a ribosyl phosphate group from 5-phosphoribose 1-diphosphate to orotate, leading to the formation of orotidine monophosphate (OMP). The chain is Orotate phosphoribosyltransferase from Phocaeicola vulgatus (strain ATCC 8482 / DSM 1447 / JCM 5826 / CCUG 4940 / NBRC 14291 / NCTC 11154) (Bacteroides vulgatus).